The sequence spans 442 residues: tRNA modification GTPase MnmE (442 aa).

(6S)-5-formyl-5,6,7,8-tetrahydrofolate-binding residues include R24, E82, and K120. The TrmE-type G domain occupies 217 to 367 (GLHIVITGEP…LVSVIKEKVE (151 aa)). GTP contacts are provided by residues 227 to 232 (NVGKST), 246 to 252 (SEYVGTT), and 271 to 274 (DTAG). 2 residues coordinate Mg(2+): S231 and T252. K442 serves as a coordination point for (6S)-5-formyl-5,6,7,8-tetrahydrofolate.

It belongs to the TRAFAC class TrmE-Era-EngA-EngB-Septin-like GTPase superfamily. TrmE GTPase family. In terms of assembly, homodimer. Heterotetramer of two MnmE and two MnmG subunits. It depends on K(+) as a cofactor.

It is found in the cytoplasm. Its function is as follows. Exhibits a very high intrinsic GTPase hydrolysis rate. Involved in the addition of a carboxymethylaminomethyl (cmnm) group at the wobble position (U34) of certain tRNAs, forming tRNA-cmnm(5)s(2)U34. This Wolbachia sp. subsp. Brugia malayi (strain TRS) protein is tRNA modification GTPase MnmE.